A 199-amino-acid chain; its full sequence is Streptomycin biosynthesis protein StrG (199 aa).

Its pathway is antibiotic biosynthesis; streptomycin biosynthesis. Functionally, may be involved in the formation of N-methyl-L-glucosamine. This Streptomyces griseus protein is Streptomycin biosynthesis protein StrG (strG).